Here is a 161-residue protein sequence, read N- to C-terminus: 3-isopropylmalate dehydratase small subunit (161 aa).

The protein belongs to the LeuD family. LeuD type 2 subfamily. Heterodimer of LeuC and LeuD.

It catalyses the reaction (2R,3S)-3-isopropylmalate = (2S)-2-isopropylmalate. It functions in the pathway amino-acid biosynthesis; L-leucine biosynthesis; L-leucine from 3-methyl-2-oxobutanoate: step 2/4. Catalyzes the isomerization between 2-isopropylmalate and 3-isopropylmalate, via the formation of 2-isopropylmaleate. This is 3-isopropylmalate dehydratase small subunit from Clostridium beijerinckii (strain ATCC 51743 / NCIMB 8052) (Clostridium acetobutylicum).